The sequence spans 20 residues: Protein PR-L2 (20 aa).

A disordered region spans residues 1 to 20; that stretch reads SVFAFENEQSSTIAPARLYK.

It belongs to the BetVI family.

In Lupinus luteus (European yellow lupine), this protein is Protein PR-L2.